The following is a 592-amino-acid chain: uncharacterized protein (592 aa).

This is an uncharacterized protein from Acanthamoeba polyphaga mimivirus (APMV).